The following is a 364-amino-acid chain: L-carnitine dehydrogenase (364 aa).

Residue 11–16 participates in NAD(+) binding; that stretch reads GGGVIG. Positions 336–364 are disordered; sequence KPAASTAAEKAKASKPVKKAEKPKKKKKG. The segment covering 348–364 has biased composition (basic residues); that stretch reads ASKPVKKAEKPKKKKKG.

This sequence belongs to the 3-hydroxyacyl-CoA dehydrogenase family. L-carnitine dehydrogenase subfamily. Homodimer.

The protein resides in the cytoplasm. It catalyses the reaction carnitine + NAD(+) = 3-dehydrocarnitine + NADH + H(+). The protein operates within amine and polyamine metabolism; carnitine metabolism. In terms of biological role, catalyzes the NAD(+)-dependent oxidation of L-carnitine to 3-dehydrocarnitine. This is L-carnitine dehydrogenase from Mesorhizobium japonicum (strain LMG 29417 / CECT 9101 / MAFF 303099) (Mesorhizobium loti (strain MAFF 303099)).